The following is a 189-amino-acid chain: Acireductone dioxygenase 1 (189 aa).

Histidine 102, histidine 104, glutamate 108, and histidine 146 together coordinate Fe(2+). Residues histidine 102, histidine 104, glutamate 108, and histidine 146 each contribute to the Ni(2+) site.

The protein belongs to the acireductone dioxygenase (ARD) family. Monomer. Fe(2+) serves as cofactor. It depends on Ni(2+) as a cofactor.

The catalysed reaction is 1,2-dihydroxy-5-(methylsulfanyl)pent-1-en-3-one + O2 = 3-(methylsulfanyl)propanoate + CO + formate + 2 H(+). The enzyme catalyses 1,2-dihydroxy-5-(methylsulfanyl)pent-1-en-3-one + O2 = 4-methylsulfanyl-2-oxobutanoate + formate + 2 H(+). Its pathway is amino-acid biosynthesis; L-methionine biosynthesis via salvage pathway; L-methionine from S-methyl-5-thio-alpha-D-ribose 1-phosphate: step 5/6. Its function is as follows. Catalyzes 2 different reactions between oxygen and the acireductone 1,2-dihydroxy-3-keto-5-methylthiopentene (DHK-MTPene) depending upon the metal bound in the active site. Fe-containing acireductone dioxygenase (Fe-ARD) produces formate and 2-keto-4-methylthiobutyrate (KMTB), the alpha-ketoacid precursor of methionine in the methionine recycle pathway. Ni-containing acireductone dioxygenase (Ni-ARD) produces methylthiopropionate, carbon monoxide and formate, and does not lie on the methionine recycle pathway. The protein is Acireductone dioxygenase 1 of Nocardia farcinica (strain IFM 10152).